The following is a 231-amino-acid chain: NAD(+) ADP-ribosyltransferase (231 aa).

It carries out the reaction NAD(+) + (ADP-D-ribosyl)n-acceptor = nicotinamide + (ADP-D-ribosyl)n+1-acceptor + H(+).. Activity increases up to 5-6 times with Mg(2+) at 50 uM or higher ion concentration. 3-aminobenzamide (3-ABA) inhibits the activity by up to half and nicotinamide to a lesser extent. Zn(2+) inhibits the activity to half-maximal rate but at 500 uM concentration of the ion. Its function is as follows. Catalyzes auto- and hetero-ADP ribosylation and produces short oligomers by elongating the ADP-ribose chain (up to 6-mer). Binds DNA non-specifically but with high affinity. Forms very stable complexes with circular DNA wherein the circular DNA confers thermostability compared to linear DNA. In Saccharolobus solfataricus (Sulfolobus solfataricus), this protein is NAD(+) ADP-ribosyltransferase.